A 239-amino-acid chain; its full sequence is Octanoyltransferase (239 aa).

In terms of domain architecture, BPL/LPL catalytic spans proline 59–lysine 239. Substrate is bound by residues arginine 101–histidine 108, serine 168–glycine 170, and glycine 181–serine 183. The active-site Acyl-thioester intermediate is the cysteine 199.

The protein belongs to the LipB family.

Its subcellular location is the cytoplasm. It carries out the reaction octanoyl-[ACP] + L-lysyl-[protein] = N(6)-octanoyl-L-lysyl-[protein] + holo-[ACP] + H(+). It functions in the pathway protein modification; protein lipoylation via endogenous pathway; protein N(6)-(lipoyl)lysine from octanoyl-[acyl-carrier-protein]: step 1/2. Catalyzes the transfer of endogenously produced octanoic acid from octanoyl-acyl-carrier-protein onto the lipoyl domains of lipoate-dependent enzymes. Lipoyl-ACP can also act as a substrate although octanoyl-ACP is likely to be the physiological substrate. This Prochlorococcus marinus (strain NATL2A) protein is Octanoyltransferase.